Consider the following 95-residue polypeptide: Small ribosomal subunit protein bS6 (95 aa).

This sequence belongs to the bacterial ribosomal protein bS6 family.

In terms of biological role, binds together with bS18 to 16S ribosomal RNA. The chain is Small ribosomal subunit protein bS6 from Thermoanaerobacter pseudethanolicus (strain ATCC 33223 / 39E) (Clostridium thermohydrosulfuricum).